The following is a 251-amino-acid chain: Ditrans,polycis-undecaprenyl-diphosphate synthase ((2E,6E)-farnesyl-diphosphate specific) (251 aa).

D20 is a catalytic residue. Mg(2+) is bound at residue D20. Substrate-binding positions include 21–24 (GNGR), W25, R33, H37, and 65–67 (SSE). N68 functions as the Proton acceptor in the catalytic mechanism. Substrate is bound by residues W69, R71, R188, and 194 to 196 (RIS). Residue E207 participates in Mg(2+) binding.

Belongs to the UPP synthase family. As to quaternary structure, homodimer. Mg(2+) serves as cofactor.

It catalyses the reaction 8 isopentenyl diphosphate + (2E,6E)-farnesyl diphosphate = di-trans,octa-cis-undecaprenyl diphosphate + 8 diphosphate. In terms of biological role, catalyzes the sequential condensation of isopentenyl diphosphate (IPP) with (2E,6E)-farnesyl diphosphate (E,E-FPP) to yield (2Z,6Z,10Z,14Z,18Z,22Z,26Z,30Z,34E,38E)-undecaprenyl diphosphate (di-trans,octa-cis-UPP). UPP is the precursor of glycosyl carrier lipid in the biosynthesis of bacterial cell wall polysaccharide components such as peptidoglycan and lipopolysaccharide. In Vibrio vulnificus (strain CMCP6), this protein is Ditrans,polycis-undecaprenyl-diphosphate synthase ((2E,6E)-farnesyl-diphosphate specific).